A 226-amino-acid polypeptide reads, in one-letter code: uncharacterized protein (226 aa).

A helical transmembrane segment spans residues 203-225 (FGISDIYTSTLSFGLIISLFYLL).

It localises to the membrane. This is an uncharacterized protein from Acanthamoeba polyphaga (Amoeba).